A 144-amino-acid chain; its full sequence is Large ribosomal subunit protein uL16 (144 aa).

This sequence belongs to the universal ribosomal protein uL16 family. In terms of assembly, part of the 50S ribosomal subunit.

Its function is as follows. Binds 23S rRNA and is also seen to make contacts with the A and possibly P site tRNAs. The protein is Large ribosomal subunit protein uL16 of Bacillus anthracis (strain A0248).